A 272-amino-acid chain; its full sequence is Single-strand selective monofunctional uracil DNA glycosylase (272 aa).

The disordered stretch occupies residues 1–27 (MAVPQPFPSGPHLQPAGALMEPQPSPR). The substrate site is built by Met-86, Phe-100, and Asn-165. Positions 175–189 (SGRNITPAELPAKQR) are DNA-binding. Position 241 (His-241) interacts with substrate.

The protein belongs to the uracil-DNA glycosylase (UDG) superfamily. SMUG1 family.

Its subcellular location is the nucleus. Functionally, recognizes base lesions in the genome and initiates base excision DNA repair. Acts as a monofunctional DNA glycosylase specific for uracil (U) residues in DNA with a preference for single-stranded DNA substrates. The activity is greater toward mismatches (U/G) compared to matches (U/A). Excises uracil (U), 5-formyluracil (fU) and uracil derivatives bearing an oxidized group at C5 [5-hydroxyuracil (hoU) and 5-hydroxymethyluracil (hmU)] in ssDNA and dsDNA, but not analogous cytosine derivatives (5-hydroxycytosine and 5-formylcytosine), nor other oxidized bases. The activity is damage-specific and salt-dependent. The substrate preference is the following: ssDNA &gt; dsDNA (G pair) = dsDNA (A pair) at low salt concentration, and dsDNA (G pair) &gt; dsDNA (A pair) &gt; ssDNA at high salt concentration. This chain is Single-strand selective monofunctional uracil DNA glycosylase (SMUG1), found in Bos taurus (Bovine).